We begin with the raw amino-acid sequence, 480 residues long: Flap endonuclease 1 (480 aa).

Residues 1–106 (MGIKGLTKFI…SELEKRGEKR (106 aa)) form an N-domain region. Asp-34 contributes to the Mg(2+) binding site. Residues Arg-47 and Arg-72 each contribute to the DNA site. Mg(2+)-binding residues include Asp-88, Glu-160, Glu-162, Asp-181, and Asp-183. The tract at residues 124–266 (EIKKQSGRTV…KTAYNLIKEY (143 aa)) is I-domain. Position 160 (Glu-160) interacts with DNA. Residues Gly-244 and Asp-246 each coordinate DNA. Asp-246 lines the Mg(2+) pocket. The interval 349–357 (TQRRLDTFF) is interaction with PCNA. The segment at 379–461 (TKGKGKKREI…NIKNENVKED (83 aa)) is disordered. Residues 404 to 428 (NVKDEKKNNEKVDELKNKSDENLVK) show a composition bias toward basic and acidic residues. The span at 429–438 (DEEDDQDDYD) shows a compositional bias: acidic residues.

This sequence belongs to the XPG/RAD2 endonuclease family. FEN1 subfamily. In terms of assembly, interacts with PCNA. Three molecules of FEN1 bind to one PCNA trimer with each molecule binding to one PCNA monomer. PCNA stimulates the nuclease activity without altering cleavage specificity. Mg(2+) serves as cofactor. Post-translationally, phosphorylated. Phosphorylation upon DNA damage induces relocalization to the nuclear plasma.

Its subcellular location is the nucleus. It localises to the nucleolus. The protein resides in the nucleoplasm. It is found in the mitochondrion. Its activity is regulated as follows. Inhibited by monovalent metal ions. Functionally, structure-specific nuclease with 5'-flap endonuclease and 5'-3' exonuclease activities involved in DNA replication and repair. During DNA replication, cleaves the 5'-overhanging flap structure that is generated by displacement synthesis when DNA polymerase encounters the 5'-end of a downstream Okazaki fragment. It enters the flap from the 5'-end and then tracks to cleave the flap base, leaving a nick for ligation. Also involved in the long patch base excision repair (LP-BER) pathway, by cleaving within the apurinic/apyrimidinic (AP) site-terminated flap. Acts as a genome stabilization factor that prevents flaps from equilibrating into structures that lead to duplications and deletions. Also possesses 5'-3' exonuclease activity on nicked or gapped double-stranded DNA, and exhibits RNase H activity. Also involved in replication and repair of rDNA and in repairing mitochondrial DNA. The polypeptide is Flap endonuclease 1 (Plasmodium yoelii yoelii).